Reading from the N-terminus, the 258-residue chain is Small ribosomal subunit protein uS2 (258 aa).

It belongs to the universal ribosomal protein uS2 family.

The protein is Small ribosomal subunit protein uS2 of Leuconostoc mesenteroides subsp. mesenteroides (strain ATCC 8293 / DSM 20343 / BCRC 11652 / CCM 1803 / JCM 6124 / NCDO 523 / NBRC 100496 / NCIMB 8023 / NCTC 12954 / NRRL B-1118 / 37Y).